The following is a 22-amino-acid chain: C-type natriuretic peptide (22 aa).

A disulfide bond links C6 and C22.

Belongs to the natriuretic peptide family.

The protein resides in the secreted. Hormone which plays a role in endochondral ossification through regulation of cartilaginous growth plate chondrocytes proliferation and differentiation. May also be vasoactive and natriuretic. Specifically binds and stimulates the cGMP production of the NPR2 receptor. Binds the clearance receptor NPR3. The protein is C-type natriuretic peptide (NPPC) of Gallus gallus (Chicken).